Consider the following 281-residue polypeptide: Cardosin-F (281 aa).

One can recognise a Peptidase A1 domain in the interval 18 to 278; it reads YYGEIGIGTP…DYGNLLVGFA (261 aa). Asp-36 is a catalytic residue. The cysteines at positions 181 and 185 are disulfide-linked. Asp-190 is an active-site residue. Asn-213 is a glycosylation site (N-linked (GlcNAc...) asparagine).

This sequence belongs to the peptidase A1 family. Heterodimer of a light chain and a heavy chain. An intermediate form is produced first, and undergoes proteolytic processing to remove the internal plant-specific insert (PSI) and the propeptide. Post-translationally, N-glycosylated. As to expression, pistils.

It is found in the microsome membrane. It localises to the protein storage vacuole. The protein localises to the secreted. The protein resides in the cell wall. Its subcellular location is the extracellular space. It is found in the extracellular matrix. Inhibited by pepstatin. Functionally, aspartic protease with a high preference for bonds between hydrophobic residues. The polypeptide is Cardosin-F (Cynara cardunculus (Cardoon)).